The chain runs to 446 residues: Cobalamin biosynthesis protein CbiHC (446 aa).

The cobalt-factor III C(17)-methyltransferase stretch occupies residues 1 to 246 (MLLLPSRGKL…MFTPRGYSNK (246 aa)). Positions 247 to 446 (YNIGEKRRAE…CLIEHADRPD (200 aa)) are cobalt-precorrin-8 methylmutase.

In the N-terminal section; belongs to the precorrin methyltransferase family. The protein in the C-terminal section; belongs to the CobH family.

The catalysed reaction is Co(II)-factor III + S-adenosyl-L-methionine + H(+) = Co(II)-factor IV + S-adenosyl-L-homocysteine. It catalyses the reaction Co-precorrin-8X = cob(II)yrinate. It functions in the pathway cofactor biosynthesis; adenosylcobalamin biosynthesis; cob(II)yrinate a,c-diamide from sirohydrochlorin (anaerobic route): step 3/10. Its pathway is cofactor biosynthesis; adenosylcobalamin biosynthesis; cob(II)yrinate a,c-diamide from sirohydrochlorin (anaerobic route): step 9/10. Bifunctional enzyme with a methyltransferase domain that catalyzes the ring contraction and methylation of C-17 in cobalt-factor III to form cobalt-factor IV, and an isomerase domain that catalyzes the conversion of cobalt-precorrin-8 to cobyrinate. This Archaeoglobus fulgidus (strain ATCC 49558 / DSM 4304 / JCM 9628 / NBRC 100126 / VC-16) protein is Cobalamin biosynthesis protein CbiHC (cbiHC).